The sequence spans 590 residues: Aspartate--tRNA(Asp/Asn) ligase (590 aa).

Glu172 is a binding site for L-aspartate. Positions 196–199 (QLFK) are aspartate. Arg218 is a binding site for L-aspartate. Residues 218-220 (RDE) and Gln227 each bind ATP. His449 provides a ligand contact to L-aspartate. Glu484 contributes to the ATP binding site. Residue Arg491 participates in L-aspartate binding. 536–539 (GIDR) is a binding site for ATP.

Belongs to the class-II aminoacyl-tRNA synthetase family. Type 1 subfamily. As to quaternary structure, homodimer.

It is found in the cytoplasm. It carries out the reaction tRNA(Asx) + L-aspartate + ATP = L-aspartyl-tRNA(Asx) + AMP + diphosphate. In terms of biological role, aspartyl-tRNA synthetase with relaxed tRNA specificity since it is able to aspartylate not only its cognate tRNA(Asp) but also tRNA(Asn). Reaction proceeds in two steps: L-aspartate is first activated by ATP to form Asp-AMP and then transferred to the acceptor end of tRNA(Asp/Asn). The chain is Aspartate--tRNA(Asp/Asn) ligase from Francisella tularensis subsp. tularensis (strain SCHU S4 / Schu 4).